A 177-amino-acid polypeptide reads, in one-letter code: Large ribosomal subunit protein uL6 (177 aa).

Belongs to the universal ribosomal protein uL6 family. Part of the 50S ribosomal subunit.

Functionally, this protein binds to the 23S rRNA, and is important in its secondary structure. It is located near the subunit interface in the base of the L7/L12 stalk, and near the tRNA binding site of the peptidyltransferase center. The chain is Large ribosomal subunit protein uL6 from Paracidovorax citrulli (strain AAC00-1) (Acidovorax citrulli).